A 437-amino-acid polypeptide reads, in one-letter code: Cysteine--tRNA ligase (437 aa).

Residue cysteine 31 participates in Zn(2+) binding. The 'HIGH' region motif lies at 33–43 (PTVYNDLHLGN). Zn(2+) contacts are provided by cysteine 205, histidine 230, and glutamate 234. Positions 262 to 266 (KMSKS) match the 'KMSKS' region motif. Lysine 265 contributes to the ATP binding site.

It belongs to the class-I aminoacyl-tRNA synthetase family. Monomer. The cofactor is Zn(2+).

It is found in the cytoplasm. It carries out the reaction tRNA(Cys) + L-cysteine + ATP = L-cysteinyl-tRNA(Cys) + AMP + diphosphate. This is Cysteine--tRNA ligase (cysS) from Mycoplasma pneumoniae (strain ATCC 29342 / M129 / Subtype 1) (Mycoplasmoides pneumoniae).